The sequence spans 132 residues: Small ribosomal subunit protein bS16 (132 aa).

Basic and acidic residues predominate over residues 82 to 107 (DSKVQSKKEHNANKVKKEVKKPEAKK). The segment at 82 to 132 (DSKVQSKKEHNANKVKKEVKKPEAKKAAASKPASKPSASKSASQKKTVSKK) is disordered. The segment covering 108–132 (AAASKPASKPSASKSASQKKTVSKK) has biased composition (low complexity).

Belongs to the bacterial ribosomal protein bS16 family.

This Malacoplasma penetrans (strain HF-2) (Mycoplasma penetrans) protein is Small ribosomal subunit protein bS16.